Reading from the N-terminus, the 77-residue chain is Pi/alpha-stichotoxin-Hmg5b (77 aa).

An N-terminal signal peptide occupies residues 1–21 (MDYQRLLFLFAVAMVITTTVA). Positions 22–34 (LPKDTALMDGQLQ) are excised as a propeptide. 3 disulfide bridges follow: Cys40-Cys73, Cys42-Cys66, and Cys56-Cys74. Met52 is subject to Methionine sulfoxide; partial.

It belongs to the sea anemone type 3 (BDS) potassium channel toxin family. Toxin occurs in two forms in the mucus, Hmg 1b-2 which is not oxidized and Hmg 1b-2 MetOx which is oxidized at Met-52.

The protein resides in the secreted. The protein localises to the nematocyst. In terms of biological role, the non-oxidized toxin is remarkably non-selective with activity on many different ion channels. Weakly and reversibly inhibits rat and human homomeric ASIC1 (isoform ASIC1a) (IC(50)=4.8 uM, and IC(50)=14.6 uM), and ASIC3 (IC(50)=15.9 uM). Molecular modeling interaction with ASIC1a suggests that this peptide hinders the collapse of acidic pockets and stabilizes nonconducting channels state. It activates several potassium channels including Kv1.1/KCNA1, Kv1.2/KCNA2, and drosophila Shaker IR. It moderately to potently inhibits potassium channels including Kv1.3/KCNA3, Kv1.4/KCNA4, Kv1.5/KCNA5, Kv1.6/KCNA6, Kv2.1/KCNB1, Kv4.2/KCND2, Kv7.1/KCNQ1, Kv7.2/Kv7.3 (KCNQ2/KCNQ3), Kv7.4/KCNQ4, hERG/KCNH2, and C.elegans QKT1. On sodium channels, it moderately to potently inhibits Nav1.1/SCN1A, Nav1.2/SCN2A, Nav1.3/SCN3A, Nav1.4/SCN4A, Nav1.5/SCN5A, Nav1.6/SCN8A, Nav1.7/SCN9A, Nav1.8/SCN10A, and B.germanica BgNav. It also moderately to potently inhibits Cav3.1/CACNA1G, Cav3.2/CACNA1H, and Cav3.3/CACNA1I. Significant shifts in the voltage-current relationship are observed on Kv and Nav, depending on the channel isoform, whereas the toxin does not seem to modulate the voltage-sensor domains of Cav channels, acting mainly as a pore blocker. Does not activate nicotinic acetylcholine receptors (nAChR), but potentiates ACh-elicited current of human alpha-7/CHRNA7 nAChR. Is also able to bind T.californica muscle-type nAChRs. In vivo, causes an excitatory effect in mice behavior. Also shows antihyperalgesic and analgesic activity in the acid-induced muscle pain mice model, and weak anti-inflammatory effect in models of acute local inflammation. Its function is as follows. Forms an oxidized toxin derivative (Hmg 1b-2 MetOx). Able to bind T.californica muscle-type nAChRs (alpha-1-beta-1-delta-epsilon (CHRNA1-CHRNB1-CHRND-CHRNE)). The sequence is that of Pi/alpha-stichotoxin-Hmg5b from Heteractis magnifica (Magnificent sea anemone).